A 61-amino-acid chain; its full sequence is Conotoxin Vn5.3 (61 aa).

The signal sequence occupies residues Met-1–Gly-19. Positions Val-20–Arg-50 are excised as a propeptide.

The protein belongs to the conotoxin T superfamily. In terms of processing, contains 2 disulfide bonds that can be either 'C1-C3, C2-C4' or 'C1-C4, C2-C3', since these disulfide connectivities have been observed for conotoxins with cysteine framework V (for examples, see AC P0DQQ7 and AC P81755). As to expression, expressed by the venom duct.

It is found in the secreted. In Conus ventricosus (Mediterranean cone), this protein is Conotoxin Vn5.3.